We begin with the raw amino-acid sequence, 432 residues long: Tyrosine-protein phosphatase non-receptor type 1 (432 aa).

Residue methionine 1 is modified to N-acetylmethionine. Residues 3–277 (MEKEFEEIDK…RFSYLAVIEG (275 aa)) form the Tyrosine-protein phosphatase domain. Tyrosine 20 is subject to Phosphotyrosine. A Phosphoserine; by CLK1, CLK2 and PKB/AKT1 or PKB/AKT2 modification is found at serine 50. Tyrosine 66 carries the phosphotyrosine; by EGFR modification. Substrate-binding positions include aspartate 181 and 215 to 221 (CSAGIGR). Cysteine 215 acts as the Phosphocysteine intermediate in catalysis. Position 215 is a cysteine persulfide (cysteine 215). S-nitrosocysteine; in reversibly inhibited form is present on cysteine 215. 2 positions are modified to phosphoserine; by CLK1 and CLK2: serine 242 and serine 243. Residue glutamine 262 coordinates substrate. Disordered stretches follow at residues 297–322 (EDLD…PHNG) and 335–399 (SEET…EEHK). Residues serine 335, serine 362, and serine 364 each carry the phosphoserine modification. Over residues 354–364 (SSAMHSVSSMS) the composition is skewed to low complexity. Threonine 367 carries the post-translational modification Phosphothreonine.

This sequence belongs to the protein-tyrosine phosphatase family. Non-receptor class 1 subfamily. As to quaternary structure, interacts with EPHA3 (phosphorylated); dephosphorylates EPHA3 and may regulate its trafficking and function. Interacts with MET. Interacts with NCK1. In terms of processing, ser-50 is the major site of phosphorylation as compared to Ser-242 and Ser-243. Activated by phosphorylation at Ser-50. Post-translationally, S-nitrosylation of Cys-215 inactivates the enzyme activity. Sulfhydration at Cys-215 following endoplasmic reticulum stress inactivates the enzyme activity, promoting EIF2AK3/PERK activity. As to expression, most abundant in testis. Also found in kidney, spleen, muscle, liver, heart and brain.

It is found in the endoplasmic reticulum membrane. The catalysed reaction is O-phospho-L-tyrosyl-[protein] + H2O = L-tyrosyl-[protein] + phosphate. In terms of biological role, tyrosine-protein phosphatase which acts as a regulator of endoplasmic reticulum unfolded protein response. Mediates dephosphorylation of EIF2AK3/PERK; inactivating the protein kinase activity of EIF2AK3/PERK. May play an important role in CKII- and p60c-src-induced signal transduction cascades. May regulate the EFNA5-EPHA3 signaling pathway which modulates cell reorganization and cell-cell repulsion. May also regulate the hepatocyte growth factor receptor signaling pathway through dephosphorylation of MET. The sequence is that of Tyrosine-protein phosphatase non-receptor type 1 (Ptpn1) from Mus musculus (Mouse).